The chain runs to 111 residues: Large ribosomal subunit protein eL30 (111 aa).

Belongs to the eukaryotic ribosomal protein eL30 family.

The protein is Large ribosomal subunit protein eL30 (RPL30) of Oryza sativa subsp. japonica (Rice).